The primary structure comprises 338 residues: NADH-quinone oxidoreductase subunit H (338 aa).

The next 8 membrane-spanning stretches (helical) occupy residues 22-42 (VVQA…MSFI), 96-116 (VAMA…ALGV), 121-141 (IGLL…LFGG), 161-181 (ISYE…AGSF), 193-213 (VWFI…GVAV), 249-269 (YVNV…GWLA), 277-297 (FVPP…MFVL), and 315-335 (WKIC…VILM).

The protein belongs to the complex I subunit 1 family. In terms of assembly, NDH-1 is composed of 14 different subunits. Subunits NuoA, H, J, K, L, M, N constitute the membrane sector of the complex.

The protein resides in the cell inner membrane. The catalysed reaction is a quinone + NADH + 5 H(+)(in) = a quinol + NAD(+) + 4 H(+)(out). NDH-1 shuttles electrons from NADH, via FMN and iron-sulfur (Fe-S) centers, to quinones in the respiratory chain. The immediate electron acceptor for the enzyme in this species is believed to be ubiquinone. Couples the redox reaction to proton translocation (for every two electrons transferred, four hydrogen ions are translocated across the cytoplasmic membrane), and thus conserves the redox energy in a proton gradient. This subunit may bind ubiquinone. This is NADH-quinone oxidoreductase subunit H from Acinetobacter baumannii (strain ATCC 17978 / DSM 105126 / CIP 53.77 / LMG 1025 / NCDC KC755 / 5377).